Reading from the N-terminus, the 230-residue chain is UPF0500 protein C1orf216 homolog (230 aa).

The segment at 1–103 (MFAAIQPGLA…AEPEKLSGAS (103 aa)) is disordered. A compositionally biased stretch (polar residues) spans 60–73 (RSSSESPSDNQVFQ). Residues 85-94 (PPEGAEIPGA) show a composition bias toward low complexity.

This sequence belongs to the UPF0500 family.

The polypeptide is UPF0500 protein C1orf216 homolog (Mus musculus (Mouse)).